Reading from the N-terminus, the 258-residue chain is 3-deoxy-manno-octulosonate cytidylyltransferase (258 aa).

The protein belongs to the KdsB family.

The protein resides in the cytoplasm. It carries out the reaction 3-deoxy-alpha-D-manno-oct-2-ulosonate + CTP = CMP-3-deoxy-beta-D-manno-octulosonate + diphosphate. Its pathway is nucleotide-sugar biosynthesis; CMP-3-deoxy-D-manno-octulosonate biosynthesis; CMP-3-deoxy-D-manno-octulosonate from 3-deoxy-D-manno-octulosonate and CTP: step 1/1. It participates in bacterial outer membrane biogenesis; lipopolysaccharide biosynthesis. Functionally, activates KDO (a required 8-carbon sugar) for incorporation into bacterial lipopolysaccharide in Gram-negative bacteria. This chain is 3-deoxy-manno-octulosonate cytidylyltransferase, found in Parvibaculum lavamentivorans (strain DS-1 / DSM 13023 / NCIMB 13966).